The following is a 286-amino-acid chain: Acetyl-coenzyme A carboxylase carboxyl transferase subunit beta (286 aa).

The region spanning 26-286 (LWEKCVKCDA…LAKFTRRAAV (261 aa)) is the CoA carboxyltransferase N-terminal domain. Positions 30, 33, 49, and 52 each coordinate Zn(2+). The C4-type zinc-finger motif lies at 30–52 (CVKCDAVLYKPELEKNLDVCPKC).

This sequence belongs to the AccD/PCCB family. Acetyl-CoA carboxylase is a heterohexamer composed of biotin carboxyl carrier protein (AccB), biotin carboxylase (AccC) and two subunits each of ACCase subunit alpha (AccA) and ACCase subunit beta (AccD). Zn(2+) serves as cofactor.

The protein resides in the cytoplasm. The catalysed reaction is N(6)-carboxybiotinyl-L-lysyl-[protein] + acetyl-CoA = N(6)-biotinyl-L-lysyl-[protein] + malonyl-CoA. It functions in the pathway lipid metabolism; malonyl-CoA biosynthesis; malonyl-CoA from acetyl-CoA: step 1/1. Functionally, component of the acetyl coenzyme A carboxylase (ACC) complex. Biotin carboxylase (BC) catalyzes the carboxylation of biotin on its carrier protein (BCCP) and then the CO(2) group is transferred by the transcarboxylase to acetyl-CoA to form malonyl-CoA. This chain is Acetyl-coenzyme A carboxylase carboxyl transferase subunit beta, found in Cellvibrio japonicus (strain Ueda107) (Pseudomonas fluorescens subsp. cellulosa).